Here is a 248-residue protein sequence, read N- to C-terminus: E3 ubiquitin-protein ligase BIG BROTHER (248 aa).

Residues 197–238 (CVICQLKYKIGERQMNLPCKHVYHSECISKWLSINKVCPVCN) form an RING-type; atypical zinc finger.

As to quaternary structure, interacts with the E2 ubiquitin conjugating enzyme UBC10 via the RING domain. Interacts with DA1. Auto-ubiquitinated. In terms of tissue distribution, mostly expressed in inflorescence, and, to a lower extent, in seedlings, roots, stems, leaves and siliques.

The catalysed reaction is S-ubiquitinyl-[E2 ubiquitin-conjugating enzyme]-L-cysteine + [acceptor protein]-L-lysine = [E2 ubiquitin-conjugating enzyme]-L-cysteine + N(6)-ubiquitinyl-[acceptor protein]-L-lysine.. It participates in protein modification; protein ubiquitination. E3 ubiquitin-protein ligase that limits organ size, and possibly seed size, in a dose-dependent manner. Negatively regulates the duration of cell proliferation in leaves and petals independently of the major phytohormones (e.g. auxin, cytokinin, gibberellin, brassinosteroids, ethylene, abscisic acid, jasmonic acid), probably by targeting growth stimulators for degradation. Limits the proliferation of root meristematic cells. Polyubiquitinates DA1. Involved in the promotion of leaf senescence, in addition to its function in restricting plant growth. Possesses E3 ubiquitin-protein ligase activity in vitro. This chain is E3 ubiquitin-protein ligase BIG BROTHER (BB), found in Arabidopsis thaliana (Mouse-ear cress).